The sequence spans 515 residues: Maturase K (515 aa).

Belongs to the intron maturase 2 family. MatK subfamily.

Its subcellular location is the plastid. It localises to the chloroplast. Its function is as follows. Usually encoded in the trnK tRNA gene intron. Probably assists in splicing its own and other chloroplast group II introns. The chain is Maturase K from Pinus contorta (Shore pine).